We begin with the raw amino-acid sequence, 593 residues long: Proteasome-associated ATPase (593 aa).

The stretch at 23 to 95 forms a coiled coil; the sequence is LLSQISYLEE…LKEEVDRLGQ (73 aa). An ATP-binding site is contributed by 282 to 287; that stretch reads GCGKTL. A docks into pockets in the proteasome alpha-ring region spans residues 592 to 593; it reads YL.

The protein belongs to the AAA ATPase family. As to quaternary structure, homohexamer. Assembles into a hexameric ring structure that caps the 20S proteasome core. Strongly interacts with the prokaryotic ubiquitin-like protein Pup through a hydrophobic interface; the interacting region of ARC lies in its N-terminal coiled-coil domain. There is one Pup binding site per ARC hexamer ring. Upon ATP-binding, the C-terminus of ARC interacts with the alpha-rings of the proteasome core, possibly by binding to the intersubunit pockets.

Its pathway is protein degradation; proteasomal Pup-dependent pathway. In terms of biological role, ATPase which is responsible for recognizing, binding, unfolding and translocation of pupylated proteins into the bacterial 20S proteasome core particle. May be essential for opening the gate of the 20S proteasome via an interaction with its C-terminus, thereby allowing substrate entry and access to the site of proteolysis. Thus, the C-termini of the proteasomal ATPase may function like a 'key in a lock' to induce gate opening and therefore regulate proteolysis. This Geodermatophilus obscurus (strain ATCC 25078 / DSM 43160 / JCM 3152 / CCUG 61914 / KCC A-0152 / KCTC 9177 / NBRC 13315 / NRRL B-3577 / G-20) protein is Proteasome-associated ATPase.